Here is a 372-residue protein sequence, read N- to C-terminus: Protein REVEILLE 7 (372 aa).

Residues 71 to 125 (TVTKQREKWSEEEHDRFLEAIKLYGRGWRQIQEHIGTKTAVQIRSHAQKFFSKMA) form the HTH myb-type domain. The H-T-H motif DNA-binding region spans 98-121 (WRQIQEHIGTKTAVQIRSHAQKFF). The disordered stretch occupies residues 124–204 (MAQEADSRSE…RCSSPNSCTS (81 aa)). The span at 145–155 (RPKRKPAHPYP) shows a compositional bias: basic residues. The span at 156-169 (RKSPVPYTQSPPPN) shows a compositional bias: pro residues. Residues 178–204 (KSPTSVLSSFGSEDQVNRCSSPNSCTS) are compositionally biased toward polar residues.

The protein localises to the nucleus. Transcription factor involved in phytochrome A-mediated cotyledon opening. Controlled by the central oscillator mediated by LHY and CCA1. Part of a regulatory circadian feedback loop. Regulates its own expression. This is Protein REVEILLE 7 (RVE7) from Arabidopsis thaliana (Mouse-ear cress).